We begin with the raw amino-acid sequence, 161 residues long: Allophycocyanin beta chain (161 aa).

The residue at position 71 (Asn-71) is an N4-methylasparagine. Cys-81 serves as a coordination point for (2R,3E)-phycocyanobilin.

It belongs to the phycobiliprotein family. As to quaternary structure, heterodimer of an alpha and a beta chain. Post-translationally, contains one covalently linked phycocyanobilin chromophore.

Its subcellular location is the cellular thylakoid membrane. In terms of biological role, light-harvesting photosynthetic bile pigment-protein from the phycobiliprotein complex. Allophycocyanin has a maximum absorption at approximately 650 nanometers. In Synechocystis sp. (strain PCC 6714) (Aphanocapsa sp. (strain PCC 6714)), this protein is Allophycocyanin beta chain (apcB).